The chain runs to 70 residues: DNA-directed RNA polymerase subunit omega (70 aa).

It belongs to the RNA polymerase subunit omega family. The RNAP catalytic core consists of 2 alpha, 1 beta, 1 beta' and 1 omega subunit. When a sigma factor is associated with the core the holoenzyme is formed, which can initiate transcription.

The catalysed reaction is RNA(n) + a ribonucleoside 5'-triphosphate = RNA(n+1) + diphosphate. Functionally, promotes RNA polymerase assembly. Latches the N- and C-terminal regions of the beta' subunit thereby facilitating its interaction with the beta and alpha subunits. The chain is DNA-directed RNA polymerase subunit omega from Staphylococcus epidermidis (strain ATCC 12228 / FDA PCI 1200).